A 152-amino-acid chain; its full sequence is Transcriptional regulator MraZ (152 aa).

SpoVT-AbrB domains follow at residues 5–52 and 81–124; these read AQAI…PLKE and ATEC…SETE.

The protein belongs to the MraZ family. Forms oligomers.

Its subcellular location is the cytoplasm. The protein resides in the nucleoid. This Mannheimia succiniciproducens (strain KCTC 0769BP / MBEL55E) protein is Transcriptional regulator MraZ.